Here is a 329-residue protein sequence, read N- to C-terminus: Terpene synthase 7 (329 aa).

A DDxx(x)D/E motif motif is present at residues 99–104 (DDLYLE). An NDxxSxxxD/E motif motif is present at residues 230–238 (NDIHSFNKE).

It belongs to the terpene synthase family.

Its function is as follows. Terpene synthase that converts its substrate farnesyl diphosphate (FPP) into 6 yet unidentified sesquiterpenes. This Dictyostelium purpureum (Slime mold) protein is Terpene synthase 7.